Consider the following 306-residue polypeptide: CRISPR-associated endonuclease Cas1 (306 aa).

Positions 143, 210, and 223 each coordinate Mn(2+).

Belongs to the CRISPR-associated endonuclease Cas1 family. In terms of assembly, homodimer, forms a heterotetramer with a Cas2 homodimer. Requires Mg(2+) as cofactor. It depends on Mn(2+) as a cofactor.

Its function is as follows. CRISPR (clustered regularly interspaced short palindromic repeat), is an adaptive immune system that provides protection against mobile genetic elements (viruses, transposable elements and conjugative plasmids). CRISPR clusters contain spacers, sequences complementary to antecedent mobile elements, and target invading nucleic acids. CRISPR clusters are transcribed and processed into CRISPR RNA (crRNA). Acts as a dsDNA endonuclease. Involved in the integration of spacer DNA into the CRISPR cassette. This Geobacter sulfurreducens (strain ATCC 51573 / DSM 12127 / PCA) protein is CRISPR-associated endonuclease Cas1.